The primary structure comprises 207 residues: ATP-dependent Clp protease proteolytic subunit 1 (207 aa).

S103 (nucleophile) is an active-site residue. The active site involves H128.

The protein belongs to the peptidase S14 family. Fourteen ClpP subunits assemble into 2 heptameric rings which stack back to back to give a disk-like structure with a central cavity, resembling the structure of eukaryotic proteasomes.

The protein resides in the cytoplasm. It catalyses the reaction Hydrolysis of proteins to small peptides in the presence of ATP and magnesium. alpha-casein is the usual test substrate. In the absence of ATP, only oligopeptides shorter than five residues are hydrolyzed (such as succinyl-Leu-Tyr-|-NHMec, and Leu-Tyr-Leu-|-Tyr-Trp, in which cleavage of the -Tyr-|-Leu- and -Tyr-|-Trp bonds also occurs).. Cleaves peptides in various proteins in a process that requires ATP hydrolysis. Has a chymotrypsin-like activity. Plays a major role in the degradation of misfolded proteins. This chain is ATP-dependent Clp protease proteolytic subunit 1, found in Tropheryma whipplei (strain Twist) (Whipple's bacillus).